Consider the following 291-residue polypeptide: MSSNFDKFQKRRLISSYFSVVLSVFLVLFLLGVLGLFIINSKKLADDFKEKIAMTVFFKNEANDSIIKAFNSELKRAPFALSYVYVTKEKAAKEHTDIIGEDFLTFLGENPLLNSYDIHLKADYVERDSILKIESALRKNTMIEDIVYDKQLVNLVNDNIKKVSMWILIISGFLTVIAVLLINSSLRLSIHSNRFIIKTMQMVGATKSFIRKPFVMRSVKLGMLGALLAIIALIGLLFYVETNFPGLGILEDKALIGLVLLAVFGLGVLITWVSTHFATQRFLNLRTDDLY.

Residues 1-18 (MSSNFDKFQKRRLISSYF) lie on the Cytoplasmic side of the membrane. Residues 19-39 (SVVLSVFLVLFLLGVLGLFII) form a helical membrane-spanning segment. Residues 40–162 (NSKKLADDFK…VNLVNDNIKK (123 aa)) are Periplasmic-facing. The helical transmembrane segment at 163-183 (VSMWILIISGFLTVIAVLLIN) threads the bilayer. The Cytoplasmic segment spans residues 184–220 (SSLRLSIHSNRFIIKTMQMVGATKSFIRKPFVMRSVK). The chain crosses the membrane as a helical span at residues 221 to 241 (LGMLGALLAIIALIGLLFYVE). The Periplasmic segment spans residues 242 to 253 (TNFPGLGILEDK). Residues 254–274 (ALIGLVLLAVFGLGVLITWVS) traverse the membrane as a helical segment. Residues 275–291 (THFATQRFLNLRTDDLY) are Cytoplasmic-facing.

It belongs to the ABC-4 integral membrane protein family. FtsX subfamily.

The protein resides in the cell inner membrane. Required for cell division and gliding motility. The protein is Cell division protein FtsX of Flavobacterium johnsoniae (strain ATCC 17061 / DSM 2064 / JCM 8514 / BCRC 14874 / CCUG 350202 / NBRC 14942 / NCIMB 11054 / UW101) (Cytophaga johnsonae).